The primary structure comprises 129 residues: Small ribosomal subunit protein uS9 (129 aa).

The protein belongs to the universal ribosomal protein uS9 family.

The sequence is that of Small ribosomal subunit protein uS9 (rpsI) from Treponema pallidum (strain Nichols).